A 226-amino-acid chain; its full sequence is uncharacterized protein (226 aa).

Belongs to the SSM1 family.

This is an uncharacterized protein from Schizosaccharomyces pombe (strain 972 / ATCC 24843) (Fission yeast).